The primary structure comprises 91 residues: Small ribosomal subunit protein uS19 (91 aa).

Belongs to the universal ribosomal protein uS19 family.

Its function is as follows. Protein S19 forms a complex with S13 that binds strongly to the 16S ribosomal RNA. The protein is Small ribosomal subunit protein uS19 of Acinetobacter baumannii (strain AB307-0294).